We begin with the raw amino-acid sequence, 238 residues long: RNA pyrophosphohydrolase (238 aa).

The Nudix hydrolase domain occupies 6 to 149 (GFRPNVGIIL…KREVYQMALS (144 aa)). The short motif at 38–59 (GGIKYGETPEQAMYRELHEEVG) is the Nudix box element. The disordered stretch occupies residues 161-238 (APLSPYGRGG…PDDTPSKDSL (78 aa)). Residues 171–181 (PHRERDGRDNR) are compositionally biased toward basic and acidic residues. A compositionally biased stretch (polar residues) spans 188-199 (RNDQNTRGQRQP). A compositionally biased stretch (low complexity) spans 204 to 217 (VTTSTVIVETVITS).

Belongs to the Nudix hydrolase family. RppH subfamily. A divalent metal cation serves as cofactor.

In terms of biological role, accelerates the degradation of transcripts by removing pyrophosphate from the 5'-end of triphosphorylated RNA, leading to a more labile monophosphorylated state that can stimulate subsequent ribonuclease cleavage. This chain is RNA pyrophosphohydrolase, found in Ralstonia nicotianae (strain ATCC BAA-1114 / GMI1000) (Ralstonia solanacearum).